We begin with the raw amino-acid sequence, 139 residues long: Large ribosomal subunit protein mL54 (139 aa).

The transit peptide at 1–50 (MPFIESMAPLSRAITRGISQFSCYSNTLVLRSSRNSSSSLVKRSYVSSRV) directs the protein to the mitochondrion. Positions 35-50 (NSSSSLVKRSYVSSRV) are enriched in low complexity. A disordered region spans residues 35–74 (NSSSSLVKRSYVSSRVSPKKPQHNSDATSSAQKVANKTHT). Residues 58–74 (NSDATSSAQKVANKTHT) show a composition bias toward polar residues.

The protein belongs to the mitochondrion-specific ribosomal protein mL54 family. As to quaternary structure, component of the mitochondrial large ribosomal subunit (mt-LSU). Mature yeast 74S mitochondrial ribosomes consist of a small (37S) and a large (54S) subunit. The 37S small subunit contains a 15S ribosomal RNA (15S mt-rRNA) and at least 32 different proteins. The 54S large subunit contains a 21S rRNA (21S mt-rRNA) and at least 45 different proteins.

It is found in the mitochondrion. Component of the mitochondrial ribosome (mitoribosome), a dedicated translation machinery responsible for the synthesis of mitochondrial genome-encoded proteins, including at least some of the essential transmembrane subunits of the mitochondrial respiratory chain. The mitoribosomes are attached to the mitochondrial inner membrane and translation products are cotranslationally integrated into the membrane. mL54 may have a meiosis-specific role as it accumulates during the middle stage of sporulation. The sequence is that of Large ribosomal subunit protein mL54 (mrpl37) from Schizosaccharomyces pombe (strain 972 / ATCC 24843) (Fission yeast).